Here is a 77-residue protein sequence, read N- to C-terminus: Small, acid-soluble spore protein Tlp (77 aa).

This sequence belongs to the Tlp family.

It is found in the spore core. This chain is Small, acid-soluble spore protein Tlp, found in Geobacillus sp. (strain WCH70).